Consider the following 434-residue polypeptide: Histidine--tRNA ligase (434 aa).

The protein belongs to the class-II aminoacyl-tRNA synthetase family. As to quaternary structure, homodimer.

Its subcellular location is the cytoplasm. The catalysed reaction is tRNA(His) + L-histidine + ATP = L-histidyl-tRNA(His) + AMP + diphosphate + H(+). This Chlorobium phaeobacteroides (strain BS1) protein is Histidine--tRNA ligase.